The chain runs to 75 residues: Large ribosomal subunit protein bL31 (75 aa).

It belongs to the bacterial ribosomal protein bL31 family. Type A subfamily. As to quaternary structure, part of the 50S ribosomal subunit.

In terms of biological role, binds the 23S rRNA. The sequence is that of Large ribosomal subunit protein bL31 from Bradyrhizobium diazoefficiens (strain JCM 10833 / BCRC 13528 / IAM 13628 / NBRC 14792 / USDA 110).